Consider the following 84-residue polypeptide: Cytochrome b559 subunit alpha (84 aa).

Residues 24 to 38 form a helical membrane-spanning segment; the sequence is IIHAVTLPAIFIAGF. His-26 serves as a coordination point for heme.

Belongs to the PsbE/PsbF family. Heterodimer of an alpha subunit and a beta subunit. PSII is composed of 1 copy each of membrane proteins PsbA, PsbB, PsbC, PsbD, PsbE, PsbF, PsbH, PsbI, PsbJ, PsbK, PsbL, PsbM, PsbT, PsbX, PsbY, Psb30/Ycf12, peripheral proteins PsbO, CyanoQ (PsbQ), PsbU, PsbV and a large number of cofactors. It forms dimeric complexes. Requires heme b as cofactor.

The protein localises to the cellular thylakoid membrane. This b-type cytochrome is tightly associated with the reaction center of photosystem II (PSII). PSII is a light-driven water:plastoquinone oxidoreductase that uses light energy to abstract electrons from H(2)O, generating O(2) and a proton gradient subsequently used for ATP formation. It consists of a core antenna complex that captures photons, and an electron transfer chain that converts photonic excitation into a charge separation. This Prochlorococcus marinus subsp. pastoris (strain CCMP1986 / NIES-2087 / MED4) protein is Cytochrome b559 subunit alpha.